The following is a 414-amino-acid chain: Multifunctional CCA protein (414 aa).

The ATP site is built by glycine 8 and arginine 11. Residues glycine 8 and arginine 11 each contribute to the CTP site. Residues aspartate 21 and aspartate 23 each coordinate Mg(2+). 3 residues coordinate ATP: arginine 91, arginine 137, and arginine 140. Arginine 91, arginine 137, and arginine 140 together coordinate CTP. An HD domain is found at 228-329 (TGIHTLLTLA…LKLLDTIDVW (102 aa)).

The protein belongs to the tRNA nucleotidyltransferase/poly(A) polymerase family. Bacterial CCA-adding enzyme type 1 subfamily. In terms of assembly, monomer. Can also form homodimers and oligomers. The cofactor is Mg(2+). Requires Ni(2+) as cofactor.

The enzyme catalyses a tRNA precursor + 2 CTP + ATP = a tRNA with a 3' CCA end + 3 diphosphate. It carries out the reaction a tRNA with a 3' CCA end + 2 CTP + ATP = a tRNA with a 3' CCACCA end + 3 diphosphate. Catalyzes the addition and repair of the essential 3'-terminal CCA sequence in tRNAs without using a nucleic acid template. Adds these three nucleotides in the order of C, C, and A to the tRNA nucleotide-73, using CTP and ATP as substrates and producing inorganic pyrophosphate. tRNA 3'-terminal CCA addition is required both for tRNA processing and repair. Also involved in tRNA surveillance by mediating tandem CCA addition to generate a CCACCA at the 3' terminus of unstable tRNAs. While stable tRNAs receive only 3'-terminal CCA, unstable tRNAs are marked with CCACCA and rapidly degraded. The chain is Multifunctional CCA protein from Edwardsiella ictaluri (strain 93-146).